The chain runs to 67 residues: Large ribosomal subunit protein uL30 (67 aa).

This sequence belongs to the universal ribosomal protein uL30 family. Part of the 50S ribosomal subunit.

The protein is Large ribosomal subunit protein uL30 of Sinorhizobium medicae (strain WSM419) (Ensifer medicae).